Consider the following 265-residue polypeptide: Putative 2-amino-3,7-dideoxy-D-threo-hept-6-ulosonate synthase 2 (265 aa).

The Proton acceptor role is filled by D27. 1-deoxy-D-threo-hexo-2,5-diulose 6-phosphate-binding positions include 27 to 31 (DHGVS) and 147 to 149 (YPR). Catalysis depends on Y147, which acts as the Proton donor. The Schiff-base intermediate with substrate role is filled by K177. Residues 202–203 (GG) and 230–231 (GR) contribute to the 1-deoxy-D-threo-hexo-2,5-diulose 6-phosphate site.

It belongs to the DeoC/FbaB aldolase family. ADHS subfamily. In terms of assembly, homodecamer.

The enzyme catalyses 1-deoxy-D-threo-hexo-2,5-diulose 6-phosphate + L-aspartate 4-semialdehyde = 2,3-dioxopropyl phosphate + 2-amino-2,3,7-trideoxy-D-lyxo-hept-6-ulosonate. Catalyzes a transaldol reaction between 6-deoxy-5-ketofructose 1-phosphate (DKFP) and L-aspartate semialdehyde (ASA) with an elimination of hydroxypyruvaldehyde phosphate to yield 2-amino-3,7-dideoxy-D-threo-hept-6-ulosonate (ADH). Plays a key role in an alternative pathway of the biosynthesis of 3-dehydroquinate (DHQ), which is involved in the canonical pathway for the biosynthesis of aromatic amino acids. This chain is Putative 2-amino-3,7-dideoxy-D-threo-hept-6-ulosonate synthase 2, found in Archaeoglobus fulgidus (strain ATCC 49558 / DSM 4304 / JCM 9628 / NBRC 100126 / VC-16).